The sequence spans 123 residues: Large ribosomal subunit protein bL19 (123 aa).

It belongs to the bacterial ribosomal protein bL19 family.

In terms of biological role, this protein is located at the 30S-50S ribosomal subunit interface and may play a role in the structure and function of the aminoacyl-tRNA binding site. The sequence is that of Large ribosomal subunit protein bL19 from Ureaplasma urealyticum serovar 10 (strain ATCC 33699 / Western).